The following is a 233-amino-acid chain: ATP synthase subunit a (233 aa).

The next 7 helical transmembrane spans lie at 29-49, 60-80, 89-109, 115-135, 143-163, 185-205, and 206-226; these read FKHVFYTWCVMAMLFAVSFIV, LQNIFEVIIGGLEEFVVSITG, VLIVFFLFILCMNLTGLVPGF, NINTTASLALFCFIYYNYIGI, IKHFMGPMWWLSPLMLPLELI, FVLILFFMLAPIIGTIPIYFL, and FTLAKVLQAFIFFMLATIYLK.

It belongs to the ATPase A chain family. F-type ATPases have 2 components, CF(1) - the catalytic core - and CF(0) - the membrane proton channel. CF(1) has five subunits: alpha(3), beta(3), gamma(1), delta(1), epsilon(1). CF(0) has three main subunits: a(1), b(2) and c(9-12). The alpha and beta chains form an alternating ring which encloses part of the gamma chain. CF(1) is attached to CF(0) by a central stalk formed by the gamma and epsilon chains, while a peripheral stalk is formed by the delta and b chains.

It is found in the cell inner membrane. Key component of the proton channel; it plays a direct role in the translocation of protons across the membrane. The polypeptide is ATP synthase subunit a (Oleidesulfovibrio alaskensis (strain ATCC BAA-1058 / DSM 17464 / G20) (Desulfovibrio alaskensis)).